A 692-amino-acid chain; its full sequence is Elongation factor G (692 aa).

Residues 8 to 283 form the tr-type G domain; sequence EDYRNFGIMA…AVVDYLPSPV (276 aa). Residues 17 to 24, 81 to 85, and 135 to 138 contribute to the GTP site; these read AHIDAGKT, DTPGH, and NKMD.

It belongs to the TRAFAC class translation factor GTPase superfamily. Classic translation factor GTPase family. EF-G/EF-2 subfamily.

The protein localises to the cytoplasm. Functionally, catalyzes the GTP-dependent ribosomal translocation step during translation elongation. During this step, the ribosome changes from the pre-translocational (PRE) to the post-translocational (POST) state as the newly formed A-site-bound peptidyl-tRNA and P-site-bound deacylated tRNA move to the P and E sites, respectively. Catalyzes the coordinated movement of the two tRNA molecules, the mRNA and conformational changes in the ribosome. The polypeptide is Elongation factor G (Caulobacter vibrioides (strain ATCC 19089 / CIP 103742 / CB 15) (Caulobacter crescentus)).